Consider the following 239-residue polypeptide: SkfA peptide export ATP-binding protein SkfE (239 aa).

The ABC transporter domain maps to 4-232 (MQVQNLSKCY…AEWRKEVIRL (229 aa)). 36-43 (GPNGAGKT) provides a ligand contact to ATP.

It belongs to the ABC transporter superfamily. SkfA peptide export (TC 3.A.1.128.1) family.

It is found in the cell membrane. The enzyme catalyses sulfate(out) + ATP + H2O = sulfate(in) + ADP + phosphate + H(+). It carries out the reaction thiosulfate(out) + ATP + H2O = thiosulfate(in) + ADP + phosphate + H(+). Functionally, probably part of the ABC transporter SkfEF involved in the export of the bacteriocin SKF. Probably responsible for energy coupling to the transport system. In Bacillus subtilis (strain 168), this protein is SkfA peptide export ATP-binding protein SkfE.